Consider the following 166-residue polypeptide: uncharacterized protein (166 aa).

This is an uncharacterized protein from Acidianus hospitalis (AFV-1).